Consider the following 397-residue polypeptide: MNAKIRKMLHNPAASGILIFLAAVAAMAVENSAWNTHYNAFLDIPVSVQFADLTIAKPLLLWINDGLMAVFFLLVGLELKREFLEGELSQPSNVILPVVGAVGGIALPAAIYTLINQGNPAALDGWAIPTATDIAFALGILALLGKRVPASLKLFLLTLAIIDDLAAILIIAFFYTSELSPASLMIAGSAIGTLILMNRLGVTGISGYMVVGIVLWIAVLKSGVHATLAGVVLGFVIPLKGEEPGELSPLHQLEDDLHHVVGLGILPLFAFANAGVSLQGLTPSILLDPVPLGIALGLFLGKQIGVFGFVWLSIKSGLAKLPEGFTWKQLYGVALLCGVGFTMSLFISSLAFEHGSSALVSGAPDMGSARLGILTGSILSGIFGYILLRFSLPKPPQ.

Helical transmembrane passes span 9–29, 59–79, 95–115, 125–145, 154–174, 177–197, 222–242, 260–280, 292–312, 332–352, and 371–391; these read LHNP…AMAV, LLLW…GLEL, ILPV…YTLI, GWAI…ALLG, LFLL…IAFF, SELS…LILM, SGVH…LKGE, VVGL…SLQG, LGIA…FVWL, GVAL…SLAF, and LGIL…LRFS.

This sequence belongs to the NhaA Na(+)/H(+) (TC 2.A.33) antiporter family.

It localises to the cell inner membrane. It catalyses the reaction Na(+)(in) + 2 H(+)(out) = Na(+)(out) + 2 H(+)(in). Na(+)/H(+) antiporter that extrudes sodium in exchange for external protons. This is Na(+)/H(+) antiporter NhaA 2 from Magnetococcus marinus (strain ATCC BAA-1437 / JCM 17883 / MC-1).